The chain runs to 132 residues: uncharacterized protein (132 aa).

A BIG2 domain is found at 45–115 (VHMEKHKLKI…VVIVTTAEGK (71 aa)).

The protein to B.anthracis BA1245.

This is an uncharacterized protein from Bacillus cereus (strain ATCC 14579 / DSM 31 / CCUG 7414 / JCM 2152 / NBRC 15305 / NCIMB 9373 / NCTC 2599 / NRRL B-3711).